Reading from the N-terminus, the 450-residue chain is Plasmepsin VII (450 aa).

The signal sequence occupies residues 1 to 24 (MNKNIIQIYLFVFILLLKQHIVIL). Residues 92-441 (YYGEVQIGEQ…DKDNLKIGFV (350 aa)) form the Peptidase A1 domain. Residues Asp-111 and Asp-324 contribute to the active site.

This sequence belongs to the peptidase A1 family.

Its subcellular location is the cytoplasm. The polypeptide is Plasmepsin VII (Plasmodium falciparum (isolate NF54)).